The sequence spans 261 residues: Cytochrome c oxidase subunit 3 (261 aa).

Topologically, residues 1–15 (MTHQTHAYHMVNPSP) are mitochondrial matrix. A helical transmembrane segment spans residues 16–34 (WPLTGALSALLMTSGLTMW). Residues 35-40 (FHFNSM) are Mitochondrial intermembrane-facing. The helical transmembrane segment at 41–66 (TLLTLGLTTNMLTMYQWWRDIIREST) threads the bilayer. Residues 67 to 72 (FQGHHT) are Mitochondrial matrix-facing. Residues 73–105 (PNVQKGLRYGMILFIISEVLFFTGFFWAFYHSS) form a helical membrane-spanning segment. Topologically, residues 106–128 (LAPTPELGGCWPPTGIHPLNPLE) are mitochondrial intermembrane. Residues 129-152 (VPLLNTSVLLASGVSITWAHHSLM) form a helical membrane-spanning segment. Residues 153 to 155 (EGN) lie on the Mitochondrial matrix side of the membrane. A helical membrane pass occupies residues 156 to 183 (RNHMLQALFITISLGVYFTLLQASEYYE). Residues 184–190 (APFTISD) lie on the Mitochondrial intermembrane side of the membrane. Residues 191-223 (GVYGSTFFVATGFHGLHVIIGSTFLIVCFFRQL) traverse the membrane as a helical segment. Over 224-232 (KFHFTSNHH) the chain is Mitochondrial matrix. The helical transmembrane segment at 233–256 (FGFEAAAWYWHFVDVVWLFLYVSI) threads the bilayer. The Mitochondrial intermembrane portion of the chain corresponds to 257–261 (YWWGS).

This sequence belongs to the cytochrome c oxidase subunit 3 family. Component of the cytochrome c oxidase (complex IV, CIV), a multisubunit enzyme composed of 14 subunits. The complex is composed of a catalytic core of 3 subunits MT-CO1, MT-CO2 and MT-CO3, encoded in the mitochondrial DNA, and 11 supernumerary subunits COX4I, COX5A, COX5B, COX6A, COX6B, COX6C, COX7A, COX7B, COX7C, COX8 and NDUFA4, which are encoded in the nuclear genome. The complex exists as a monomer or a dimer and forms supercomplexes (SCs) in the inner mitochondrial membrane with NADH-ubiquinone oxidoreductase (complex I, CI) and ubiquinol-cytochrome c oxidoreductase (cytochrome b-c1 complex, complex III, CIII), resulting in different assemblies (supercomplex SCI(1)III(2)IV(1) and megacomplex MCI(2)III(2)IV(2)).

Its subcellular location is the mitochondrion inner membrane. It catalyses the reaction 4 Fe(II)-[cytochrome c] + O2 + 8 H(+)(in) = 4 Fe(III)-[cytochrome c] + 2 H2O + 4 H(+)(out). In terms of biological role, component of the cytochrome c oxidase, the last enzyme in the mitochondrial electron transport chain which drives oxidative phosphorylation. The respiratory chain contains 3 multisubunit complexes succinate dehydrogenase (complex II, CII), ubiquinol-cytochrome c oxidoreductase (cytochrome b-c1 complex, complex III, CIII) and cytochrome c oxidase (complex IV, CIV), that cooperate to transfer electrons derived from NADH and succinate to molecular oxygen, creating an electrochemical gradient over the inner membrane that drives transmembrane transport and the ATP synthase. Cytochrome c oxidase is the component of the respiratory chain that catalyzes the reduction of oxygen to water. Electrons originating from reduced cytochrome c in the intermembrane space (IMS) are transferred via the dinuclear copper A center (CU(A)) of subunit 2 and heme A of subunit 1 to the active site in subunit 1, a binuclear center (BNC) formed by heme A3 and copper B (CU(B)). The BNC reduces molecular oxygen to 2 water molecules using 4 electrons from cytochrome c in the IMS and 4 protons from the mitochondrial matrix. The protein is Cytochrome c oxidase subunit 3 (MT-CO3) of Antidorcas marsupialis (Springbok).